Consider the following 803-residue polypeptide: Phenylalanine--tRNA ligase beta subunit (803 aa).

Residues 39 to 151 (SMKFSGIKIG…KNAIIGEDIK (113 aa)) enclose the tRNA-binding domain. The region spanning 406–482 (PKKILIKLYK…RFYGFEKIPI (77 aa)) is the B5 domain. Mg(2+) contacts are provided by aspartate 466 and aspartate 470. Positions 707 to 800 (SDIPFNYRDI…LKKNFLIEIR (94 aa)) constitute an FDX-ACB domain.

This sequence belongs to the phenylalanyl-tRNA synthetase beta subunit family. Type 1 subfamily. Tetramer of two alpha and two beta subunits. Mg(2+) serves as cofactor.

It localises to the cytoplasm. It carries out the reaction tRNA(Phe) + L-phenylalanine + ATP = L-phenylalanyl-tRNA(Phe) + AMP + diphosphate + H(+). In Wigglesworthia glossinidia brevipalpis, this protein is Phenylalanine--tRNA ligase beta subunit.